The sequence spans 280 residues: Small ribosomal subunit protein uS15m (280 aa).

This sequence belongs to the universal ribosomal protein uS15 family. As to quaternary structure, component of the mitochondrial ribosome small subunit (28S) which comprises a 12S rRNA and about 30 distinct proteins. As to expression, expressed in anterior and posterior midgut primordia in stage 11 embryos. In stage 13 embryos, expression is high in the developing midgut and hindgut. In stage 16 embryos, expression is elevated in the midgut, hindgut, and in a small region that will give rise to pharyngeal muscles and to the stomatogastric nervous system. In larvae, expression is predominant in the gut, and head, presumably in pharyngeal muscles.

The protein localises to the mitochondrion. In terms of biological role, essential for gut mitochondrial activity. Might be involved in tissue specific growth factor production. The polypeptide is Small ribosomal subunit protein uS15m (bonsai) (Drosophila melanogaster (Fruit fly)).